Reading from the N-terminus, the 324-residue chain is tRNA pseudouridine synthase B (324 aa).

Asp-49 functions as the Nucleophile in the catalytic mechanism. A disordered region spans residues 87-107 (RSTDDLEGQPTKTSDKRPSRE).

It belongs to the pseudouridine synthase TruB family. Type 1 subfamily.

It carries out the reaction uridine(55) in tRNA = pseudouridine(55) in tRNA. In terms of biological role, responsible for synthesis of pseudouridine from uracil-55 in the psi GC loop of transfer RNAs. The polypeptide is tRNA pseudouridine synthase B (Brucella melitensis biotype 1 (strain ATCC 23456 / CCUG 17765 / NCTC 10094 / 16M)).